A 997-amino-acid polypeptide reads, in one-letter code: Signal peptide, CUB and EGF-like domain-containing protein 2 (997 aa).

A signal peptide spans 1-28; the sequence is MGVAGCGRPREARALLLLLLLLPPLLAA. The 41-residue stretch at 43–83 folds into the EGF-like 1; calcium-binding domain; the sequence is DVDECAQGLDDCHADALCQNTPTSYKCSCKPGYQGEGRQCE. 8 disulfide bridges follow: C47–C60, C54–C69, C71–C82, C88–C100, C96–C109, C111–C124, C130–C141, and C137–C150. The EGF-like 2; calcium-binding domain occupies 84-125; the sequence is DMDECDNTLNGGCVHDCLNIPGNYRCTCFDGFMLAHDGHNCL. Residues 126 to 162 enclose the EGF-like 3; calcium-binding domain; that stretch reads DMDECLENNGGCQHICTNVIGSYECRCKEGFFLSDNQ. EGF-like domains follow at residues 175–211, 215–250, and 284–319; these read CMNKDHGCGHICKEAPRGSVACECRPGFELAKNQKDC, CNHGNGGCQHSCEDTAEGPECSCHPRYRLHADGRSC, and CAVNNGGCDRTCKDTSTGVHCSCPTGFTLQVDGKTC. The EGF-like 7; calcium-binding domain maps to 321-361; it reads DIDECQTRNGGCNHFCKNTVGSFDCSCKKGFKLLTDEKSCQ. 9 disulfide bridges follow: C325/C336, C332/C345, C347/C360, C366/C376, C372/C385, C387/C399, C405/C416, C412/C425, and C427/C440. The EGF-like 8; calcium-binding domain occupies 362-400; it reads DVDECSLERTCDHSCINHPGTFICACNPGYTLYSFTHCG. Positions 401-441 constitute an EGF-like 9; calcium-binding domain; it reads DTNECSVNNGGCQQVCINTVGSYECQCHPGFKLHWNKKDCV. N657 carries N-linked (GlcNAc...) asparagine glycosylation. A disulfide bridge links C807 with C833. Residues 807–919 form the CUB domain; it reads CGGELGDFTG…RGFQVPYVTY (113 aa). The tract at residues 845–854 is interaction with the cholesterol-anchor of SHH; that stretch reads ILIVVPEIFL. A disulfide bridge connects residues C860 and C881.

Interacts with SHH via the cholesterol anchor of the dually lipid-modified SHH (ShhNp). Interacts with PTCH1. Forms homooligomers and heterooligomers with SCUBE1 and SCUBE3. Interacts with VEGFR2. Post-translationally, N-glycosylated. As to expression, expressed in adult heart, lung and testis.

It is found in the secreted. Its subcellular location is the cell surface. Lipid-binding protein required for SHH long-range signaling by binding to the dually lipid-modified SHH (ShhNp) and by promoting ShhNp mobilization, solubilization and release from the cell membrane. Acts by enhancing the proteolytic processing (shedding) of the lipid-modified N- and C- terminal of ShhNp at the cell surface. Synergizes with DISP1 to cause an increase in SHH secretion. Probable cell surface coreceptor for VEGFR2 involved in VEGFR2-mediated angiogenesis. The sequence is that of Signal peptide, CUB and EGF-like domain-containing protein 2 from Mus musculus (Mouse).